The chain runs to 98 residues: NADH-ubiquinone oxidoreductase chain 4L (98 aa).

A run of 3 helical transmembrane segments spans residues 1 to 21 (MMPI…GALV), 28 to 48 (STLL…ALLI), and 59 to 79 (APLI…ALLV).

The protein belongs to the complex I subunit 4L family. As to quaternary structure, core subunit of respiratory chain NADH dehydrogenase (Complex I) which is composed of 45 different subunits.

Its subcellular location is the mitochondrion inner membrane. It catalyses the reaction a ubiquinone + NADH + 5 H(+)(in) = a ubiquinol + NAD(+) + 4 H(+)(out). Its function is as follows. Core subunit of the mitochondrial membrane respiratory chain NADH dehydrogenase (Complex I) which catalyzes electron transfer from NADH through the respiratory chain, using ubiquinone as an electron acceptor. Part of the enzyme membrane arm which is embedded in the lipid bilayer and involved in proton translocation. This is NADH-ubiquinone oxidoreductase chain 4L (MT-ND4L) from Distoechurus pennatus (Feather-tailed possum).